Here is a 975-residue protein sequence, read N- to C-terminus: Glycine dehydrogenase (decarboxylating) (975 aa).

K723 is modified (N6-(pyridoxal phosphate)lysine).

Belongs to the GcvP family. As to quaternary structure, the glycine cleavage system is composed of four proteins: P, T, L and H. It depends on pyridoxal 5'-phosphate as a cofactor.

It catalyses the reaction N(6)-[(R)-lipoyl]-L-lysyl-[glycine-cleavage complex H protein] + glycine + H(+) = N(6)-[(R)-S(8)-aminomethyldihydrolipoyl]-L-lysyl-[glycine-cleavage complex H protein] + CO2. Functionally, the glycine cleavage system catalyzes the degradation of glycine. The P protein binds the alpha-amino group of glycine through its pyridoxal phosphate cofactor; CO(2) is released and the remaining methylamine moiety is then transferred to the lipoamide cofactor of the H protein. The protein is Glycine dehydrogenase (decarboxylating) of Burkholderia orbicola (strain MC0-3).